The chain runs to 275 residues: Lectin (275 aa).

Positions 1 to 30 are cleaved as a signal peptide; the sequence is MASLQTQMISFYLIFLSILLTTIFFFKVNS. Residues Asp-111 and Gly-129 each contribute to the D-glucose site. Positions 149 and 151 each coordinate Mn(2+). Positions 151, 153, 155, and 159 each coordinate Ca(2+). 2 residues coordinate Mn(2+): Asp-159 and His-166. Positions 211 to 217 are excised as a propeptide; sequence NSLEEEN. D-glucose contacts are provided by Gly-246 and Ala-247. Residues 270–275 constitute a propeptide that is removed on maturation; it reads KQAADA.

This sequence belongs to the leguminous lectin family. As to quaternary structure, heterotetramer of two alpha and two beta chains. The mature form consists of two chains, alpha and beta, produced by cleavage of the immature protein. These remain cleaved, yet fold together to form one subunit.

In terms of biological role, D-mannose specific lectin. The polypeptide is Lectin (Lens culinaris subsp. culinaris (Cultivated lentil)).